Consider the following 142-residue polypeptide: Large ribosomal subunit protein uL13 (142 aa).

The protein belongs to the universal ribosomal protein uL13 family. Part of the 50S ribosomal subunit.

Its function is as follows. This protein is one of the early assembly proteins of the 50S ribosomal subunit, although it is not seen to bind rRNA by itself. It is important during the early stages of 50S assembly. The sequence is that of Large ribosomal subunit protein uL13 from Polynucleobacter asymbioticus (strain DSM 18221 / CIP 109841 / QLW-P1DMWA-1) (Polynucleobacter necessarius subsp. asymbioticus).